Consider the following 489-residue polypeptide: Acetylcholine receptor subunit beta (489 aa).

The N-terminal stretch at 1–20 (NSGALLWPLIWGLLLIGTQA) is a signal peptide. At 21 to 235 (LDKEAQLRDK…ITFYLVIQRK (215 aa)) the chain is on the extracellular side. N-linked (GlcNAc...) asparagine glycans are attached at residues Asn-135 and Asn-161. Cys-148 and Cys-162 form a disulfide bridge. Transmembrane regions (helical) follow at residues 236–260 (PLFY…VFYL), 268–286 (MTLS…LLLA), and 302–323 (YLIF…VLNL). Residues 324–457 (HHRSPNTHHM…WQYVAMVVDR (134 aa)) lie on the Cytoplasmic side of the membrane. The helical transmembrane segment at 458 to 476 (LFLWTFIAFTSLGTLSIFL) threads the bilayer.

The protein belongs to the ligand-gated ion channel (TC 1.A.9) family. Acetylcholine receptor (TC 1.A.9.1) subfamily. Beta-1/CHRNB1 sub-subfamily. As to quaternary structure, pentamer of two alpha chains, and one each of the beta, delta, and gamma (in immature muscle) or epsilon (in mature muscle) chains.

The protein localises to the postsynaptic cell membrane. It localises to the cell membrane. It catalyses the reaction K(+)(in) = K(+)(out). The enzyme catalyses Na(+)(in) = Na(+)(out). Functionally, after binding acetylcholine, the AChR responds by an extensive change in conformation that affects all subunits and leads to opening of an ion-conducting channel across the plasma membrane. The protein is Acetylcholine receptor subunit beta (chrnb1) of Xenopus laevis (African clawed frog).